The primary structure comprises 643 residues: MRFKNVLVLLLLLVFSVINSEPSAPATISDNIYTTLYSSYPCTKIMTSDGQFGCSSKHGGNSGILYLIDDDESYNNYFSYSQQKDIIVVLDTNYFNSTSVLNLHNKSKIEGIIVLTDTKKTYPYSPDSRYPNKIYGLYPNSNLEWNPNADGFTYFSFPFPIFAIDNQTSVAIRNVSKHNRDGQYPAWGAELDSFMQGAINSETCLRRGFCEPVGGQSIWSSFSSKIDKEKEIILVMLPFDTTAFFRDLSIGADQSSFATVTLLSVIKSLAAVDRSSWNKEVVFAFWNAERWGYVGSEYFINDLLNFQCKTYNSDKSKCIDPPRADLAFQTQINFTKISTIIELNQIGRAQLDKNLGKYSLYLHTAGTKTSSVTDILDQVASSYENSTITFKPTTQTELPPSSSMSFLKKTNKIPVVVITDHDYKYSNPYYGYEQDDNENVLGSTLNDIVYILSTFIDRIAGGNNNITIDKNFINILYPCFTSSITCFNILMKTYPLNEVPNFYSSVFGTSLTTTLSPYETKLIHRLLYSITQYNSTLTNCTSDNDCPSSLCYSGQCVSSNTHLHNALSLGFDFDTSKNVWKIVNSSYPIFTESNWDYTALKVFKIGNSTTEIWFLVSGLIELLVSIGLILYVKKFLSNRYKLL.

The first 20 residues, 1–20, serve as a signal peptide directing secretion; that stretch reads MRFKNVLVLLLLLVFSVINS. Topologically, residues 21–611 are extracellular; sequence EPSAPATISD…VFKIGNSTTE (591 aa). Cys42 and Cys54 are joined by a disulfide. Asn96 and Asn166 each carry an N-linked (GlcNAc...) asparagine glycan. Disulfide bonds link Cys204/Cys210 and Cys308/Cys318. N-linked (GlcNAc...) asparagine glycosylation is found at Asn333 and Asn385. 3 cysteine pairs are disulfide-bonded: Cys479–Cys486, Cys540–Cys551, and Cys546–Cys556. Residue Asn584 is glycosylated (N-linked (GlcNAc...) asparagine). Residues 612 to 632 traverse the membrane as a helical segment; it reads IWFLVSGLIELLVSIGLILYV. Residues 633-643 are Cytoplasmic-facing; the sequence is KKFLSNRYKLL.

Belongs to the nicastrin family. As to quaternary structure, component of the gamma-secretase complex, a complex composed of a presenilin homodimer, nicastrin, aph1 and pen2.

It localises to the membrane. Functionally, essential subunit of the gamma-secretase complex, an endoprotease complex that catalyzes the intramembrane cleavage of integral membrane proteins such as Notch receptors and APP (amyloid-beta precursor protein). The sequence is that of Nicastrin from Dictyostelium purpureum (Slime mold).